The primary structure comprises 928 residues: cGMP-dependent 3',5'-cyclic phosphodiesterase (928 aa).

A Phosphoserine modification is found at S109. Positions 188–210 (RRPEAVQNTSADPSEDQKDEKGY) are disordered. 2 GAF domains span residues 228–365 (DATS…GTVL) and 397–536 (DVSV…GISI). The 3',5'-cyclic GMP site is built by S419, D434, I453, Y476, and T487. Residues 566 to 890 (SDDEYTKLLH…EHWTKVSHKF (325 aa)) form the PDEase domain. Residue H644 is the Proton donor of the active site. 4 residues coordinate Zn(2+): H648, H684, D685, and D796. Mg(2+) is bound at residue D685.

This sequence belongs to the cyclic nucleotide phosphodiesterase family. PDE2 subfamily. As to quaternary structure, homodimer. It depends on Zn(2+) as a cofactor. Mg(2+) is required as a cofactor. As to expression, expressed in brain and liver.

It localises to the cell membrane. Its subcellular location is the cytoplasm. It is found in the mitochondrion matrix. The protein resides in the mitochondrion inner membrane. The protein localises to the mitochondrion outer membrane. It catalyses the reaction a nucleoside 3',5'-cyclic phosphate + H2O = a nucleoside 5'-phosphate + H(+). The catalysed reaction is 3',5'-cyclic GMP + H2O = GMP + H(+). It carries out the reaction 3',5'-cyclic AMP + H2O = AMP + H(+). The 3',5'-cyclic-AMP phosphodiesterase activity is stimulated by 3',5'-cyclic GMP. Specifically inhibited by Bay 60-7550. When repressed, protected from ionomycin- but not staurosporin-induced cell death. Functionally, cGMP-activated cyclic nucleotide phosphodiesterase with a dual-specificity for the second messengers cAMP and cGMP, which are key regulators of many important physiological processes. Has a higher efficiency with cGMP compared to cAMP. Plays a role in cell growth and migration. Its function is as follows. Regulates mitochondrial cAMP levels and respiration. Involved in the regulation of mitochondria morphology/dynamics and apoptotic cell death via local modulation of cAMP/PKA signaling in the mitochondrion, including the monitoring of local cAMP levels at the outer mitochondrial membrane and of PKA-dependent phosphorylation of Dnm1l. This is cGMP-dependent 3',5'-cyclic phosphodiesterase from Rattus norvegicus (Rat).